Consider the following 113-residue polypeptide: MNTVRVTFLLVFVLAVSLGQADKDENRMEMQEKTEQGKGYLDFAENLLPQKLEELEAKLLEEDSEESRNSRQKRCIGEGVPCDENDPRCCSGLVCLKPTLHGIWYKSYYCYKK.

The signal sequence occupies residues 1–21; it reads MNTVRVTFLLVFVLAVSLGQA. Residues 22–74 constitute a propeptide that is removed on maturation; sequence DKDENRMEMQEKTEQGKGYLDFAENLLPQKLEELEAKLLEEDSEESRNSRQKR. A compositionally biased stretch (basic and acidic residues) spans 59-69; sequence LLEEDSEESRN. The tract at residues 59–83 is disordered; the sequence is LLEEDSEESRNSRQKRCIGEGVPCD. Disulfide bonds link Cys-75–Cys-90, Cys-82–Cys-95, and Cys-89–Cys-110.

Belongs to the neurotoxin 14 (magi-1) family. 01 (HNTX-16) subfamily. In terms of tissue distribution, expressed by the venom gland.

It is found in the secreted. Functionally, probable ion channel inhibitor. The chain is U11-theraphotoxin-Hhn1a from Cyriopagopus hainanus (Chinese bird spider).